The sequence spans 500 residues: Probable cation transporter HKT1;4 (500 aa).

Residues 1–12 (MPTSRRALAGGA) are Cytoplasmic-facing. 2 helical membrane-spanning segments follow: residues 13 to 33 (LSMHVAYFLAISCLGYGLLGV) and 74 to 94 (LVVLTVLMLLGGEVFVSLVGL). The Cytoplasmic portion of the chain corresponds to 95–156 (ASKWSKLRSD…ADTLRHNAVR (62 aa)). The disordered stretch occupies residues 121–145 (ADIDGGDVENPTSSGEEAASRRRPM). Transmembrane regions (helical) follow at residues 157–177 (ALFYIVLAIFAVVHVVGAVAV) and 239–259 (VLAGNTLFAPLLAACVWAAAA). The Cytoplasmic portion of the chain corresponds to 260–290 (ATRREELVEMAREGGRAAAAGYAHLMPARRC). 2 helical membrane-spanning segments follow: residues 291-311 (WMLAATVAAFVAVLMALVCGM) and 346-366 (LSILAPAILVLFVLMMYLPPY). At 367–390 (TTWFPFEENSTTKDSNAENQGIRL) the chain is on the cytoplasmic side. The next 2 helical transmembrane spans lie at 391–411 (LESTLLSQLSYLTIFVIAICI) and 464–484 (GFVGRWSDSGKLILIFVMFFG). Over 485-500 (RLKKFSMKGGKAWKLS) the chain is Cytoplasmic.

It belongs to the TrkH potassium transport family. HKT (TC 2.A.38.3) subfamily.

Its subcellular location is the membrane. Probable cation transporter. May be involved in regulation of potassium-sodium homeostasis. The chain is Probable cation transporter HKT1;4 from Oryza sativa subsp. japonica (Rice).